A 48-amino-acid chain; its full sequence is Large ribosomal subunit protein eL40 (48 aa).

The protein belongs to the eukaryotic ribosomal protein eL40 family.

This chain is Large ribosomal subunit protein eL40, found in Methanoregula boonei (strain DSM 21154 / JCM 14090 / 6A8).